We begin with the raw amino-acid sequence, 461 residues long: MKISVRNLEPTKAKLTITVDQDEFDPYLEDARKEIAEQITVPGFRKGHVPGKLVDQRVGFGAVAGEAVNKALPDMYAKALDEKDIRPMDQPQIEVVEMPQSAADDTKLKFTATVERRPEFELPNLEGLEIAVDKAEVSDDDVNNRLGTLRQRFATLVGVDRPAQKGDFANIDLTAQTDGETVDSQEGVSYEIGSGTMLDGLDEALEGLSAGEETTFESTLEGGDHEGEKAQVKVKVNSVKAEELPELDDDFAQEASEFDTLDELKAEIRKNIEADAEGRQATIARDAFIETLEEGLDIPLPKGVRNNMVEQQLKSMGVEAGKATSDQKKEAEEAVDKMLKDQMVLDALAEKLDVQVSQSDVFNFLGSIAQQYGMDPNMFIQALMRNGQIGSARREVARSRACSPGCVRWKFTVDGEPLDLSGFLGSEEAEAQAEEDESVAAAAAAAAVADNLTSDDGTDAE.

The PPIase FKBP-type domain occupies 166-245 (GDFANIDLTA…VNSVKAEELP (80 aa)).

The protein belongs to the FKBP-type PPIase family. Tig subfamily.

The protein localises to the cytoplasm. It carries out the reaction [protein]-peptidylproline (omega=180) = [protein]-peptidylproline (omega=0). Involved in protein export. Acts as a chaperone by maintaining the newly synthesized protein in an open conformation. Functions as a peptidyl-prolyl cis-trans isomerase. In Bifidobacterium animalis subsp. lactis (strain AD011), this protein is Trigger factor.